Here is a 710-residue protein sequence, read N- to C-terminus: Ephexin-1 (710 aa).

Over residues 1 to 20 (METKNSEDWGKPQRKSESSS) the composition is skewed to basic and acidic residues. The interval 1–146 (METKNSEDWG…TPEECPALTD (146 aa)) is disordered. Residues 1-272 (METKNSEDWG…VLDILQPEEI (272 aa)) form a regulatory region; modulates activity toward RHOA, RAC1 and CDC42 region. Polar residues predominate over residues 123 to 137 (QEASESSSTPGNGTT). Phosphotyrosine is present on Y177. The tract at residues 192–234 (RRQQDAEIQGNSDGSQVGEDAGEEEEEEEEGEEEELASPPERR) is disordered. Residues 211–227 (DAGEEEEEEEEGEEEEL) are compositionally biased toward acidic residues. Residues 273 to 457 (RLQEAMFELV…EMVVKACNEG (185 aa)) enclose the DH domain. Residues 489-601 (WLLKQGELQQ…WMTSLAPNRR (113 aa)) enclose the PH domain. The SH3 domain maps to 612 to 673 (LDCPQVQCVH…PSSMTEEILN (62 aa)). Positions 688 to 699 (HKMEDPQRSQNK) are enriched in basic and acidic residues. Residues 688-710 (HKMEDPQRSQNKDRRKLGSRNRQ) are disordered. A compositionally biased stretch (basic residues) spans 700–710 (DRRKLGSRNRQ).

In terms of assembly, interacts with CDK5R1 and EPHA4; activated by EPHA4 through the CDK5 kinase. In terms of processing, src-dependent phosphorylation at Tyr-177 upon EPHA4 activation increases the guanine exchange factor activity toward RHOA. Phosphorylation by CDK5 upon EPHA4 activation by EFNA1 may regulate dendritic spine morphogenesis. As to expression, highly expressed in brain and to a lower extent in eye.

It is found in the cytoplasm. The protein resides in the membrane. The protein localises to the cell projection. Its subcellular location is the growth cone. Its function is as follows. Acts as a guanine nucleotide exchange factor (GEF) which differentially activates the GTPases RHOA, RAC1 and CDC42. Plays a role in axon guidance regulating ephrin-induced growth cone collapse and dendritic spine morphogenesis. Upon activation by ephrin through EPHA4, the GEF activity switches toward RHOA resulting in its activation. Activated RHOA promotes cone retraction at the expense of RAC1- and CDC42-stimulated growth cone extension. This Mus musculus (Mouse) protein is Ephexin-1 (Ngef).